The primary structure comprises 365 residues: NAD(P)H-quinone oxidoreductase subunit 1, chloroplastic (365 aa).

Transmembrane regions (helical) follow at residues 30–50 (LVPILTLVLGITIGILVIVWL), 104–124 (IAVISTLLSYSVIPFGYHFVL), 129–149 (IGVFLWIAISSIAPIGLLMSG), 253–273 (FGLFYVASYLNLLVSSLFVAV), 302–322 (VFGTTMGILITLVKTYLFLFI), and 338–358 (LLNLGWKFLLPISLGNLLLTT).

The protein belongs to the complex I subunit 1 family. NDH is composed of at least 16 different subunits, 5 of which are encoded in the nucleus.

The protein localises to the plastid. Its subcellular location is the chloroplast thylakoid membrane. The catalysed reaction is a plastoquinone + NADH + (n+1) H(+)(in) = a plastoquinol + NAD(+) + n H(+)(out). The enzyme catalyses a plastoquinone + NADPH + (n+1) H(+)(in) = a plastoquinol + NADP(+) + n H(+)(out). In terms of biological role, NDH shuttles electrons from NAD(P)H:plastoquinone, via FMN and iron-sulfur (Fe-S) centers, to quinones in the photosynthetic chain and possibly in a chloroplast respiratory chain. The immediate electron acceptor for the enzyme in this species is believed to be plastoquinone. Couples the redox reaction to proton translocation, and thus conserves the redox energy in a proton gradient. The polypeptide is NAD(P)H-quinone oxidoreductase subunit 1, chloroplastic (Populus trichocarpa (Western balsam poplar)).